We begin with the raw amino-acid sequence, 318 residues long: Ribonuclease Z (318 aa).

Zn(2+) is bound by residues His62, His64, Asp66, His67, His139, Asp210, and His268. Asp66 acts as the Proton acceptor in catalysis.

It belongs to the RNase Z family. Homodimer. Zn(2+) is required as a cofactor.

The enzyme catalyses Endonucleolytic cleavage of RNA, removing extra 3' nucleotides from tRNA precursor, generating 3' termini of tRNAs. A 3'-hydroxy group is left at the tRNA terminus and a 5'-phosphoryl group is left at the trailer molecule.. Zinc phosphodiesterase, which displays some tRNA 3'-processing endonuclease activity. Probably involved in tRNA maturation, by removing a 3'-trailer from precursor tRNA. In Microcystis aeruginosa (strain NIES-843 / IAM M-2473), this protein is Ribonuclease Z.